A 119-amino-acid chain; its full sequence is C-X-C motif chemokine 17 (119 aa).

The first 21 residues, 1 to 21 (MKVLISSLLLLLPLMLMSMVS), serve as a signal peptide directing secretion. Cystine bridges form between Cys-75-Cys-103 and Cys-77-Cys-110. Residues 81-100 (KGNVKKTRHQRHHRKPNKHS) are disordered. Positions 82–100 (GNVKKTRHQRHHRKPNKHS) are enriched in basic residues.

It belongs to the intercrine alpha (chemokine CxC) family. Likely to undergo an endoproteolytic process to form a four-cysteine-containing mature peptide with a canonical CXC chemokine scaffold after secretion. In terms of tissue distribution, detected in trachea, stomach, lung and skeletal muscle. Detected in intestine and in normal and asthmatic lung (at protein level). Breast tumors showed 3- to 24-fold up-regulation.

It localises to the secreted. In terms of biological role, chemokine that acts as a chemoattractant for monocytes, macrophages and dendritic cells. Plays a role in angiogenesis and possibly in the development of tumors. Acts as an anti-inflammatory in the stomach. May play a role in the innate defense against infections. Activates the C-X-C chemokine receptor GPR35 to induce a rapid and transient rise in the level of intracellular calcium ions. Its function is as follows. Seems to exhibit much higher chemoattractant potency on monocytes and macrophages than 6-Cys CXCL17. The sequence is that of C-X-C motif chemokine 17 (CXCL17) from Homo sapiens (Human).